A 529-amino-acid polypeptide reads, in one-letter code: N5-hydroxyornithine acetylase sidL (529 aa).

Disordered stretches follow at residues 59-95 (ASVN…VRPF) and 239-258 (SPWP…SPVA). Histidine 462 provides a ligand contact to substrate. The active-site Proton acceptor is the glutamate 498.

Belongs to the lysine N-acyltransferase mbtK family.

Its subcellular location is the cytoplasm. It is found in the cytosol. Its pathway is siderophore biosynthesis. Acyltransferase; part of the gene cluster that mediates the biosynthesis of at least 11 siderophores, including beauverichelin A, dimerumic acid (DA), Na-dimethyl coprogen (NADC), eleutherazine B, ferricrocin (FC), fusarinine A, fusarinine C (FsC), metachelin A, mevalonolactone, rhodotorulic acid (RA) and tenellin. This cocktail of siderophores for iron metabolism is essential for virulence, and more specifically for the fungal virulence in penetrating through the host cuticle. Siderophore synthesis is also involved in conidial germination under iron-deficient conditions. SIDL contributes to partial production of ferricrocin under iron-limiting conditions via the acetylation of N(5)-hydroxyornithine. The protein is N5-hydroxyornithine acetylase sidL of Beauveria bassiana (strain ARSEF 2860) (White muscardine disease fungus).